Consider the following 736-residue polypeptide: Elongation factor 2 (736 aa).

Residues 18 to 261 (EQVRNIGITA…MVVKFIPNPR (244 aa)) enclose the tr-type G domain. Residues 27–34 (AHVDHGKT), 93–97 (DTPGH), and 147–150 (NKVD) contribute to the GTP site. Residue H602 is modified to Diphthamide.

This sequence belongs to the TRAFAC class translation factor GTPase superfamily. Classic translation factor GTPase family. EF-G/EF-2 subfamily.

The protein resides in the cytoplasm. Its function is as follows. Catalyzes the GTP-dependent ribosomal translocation step during translation elongation. During this step, the ribosome changes from the pre-translocational (PRE) to the post-translocational (POST) state as the newly formed A-site-bound peptidyl-tRNA and P-site-bound deacylated tRNA move to the P and E sites, respectively. Catalyzes the coordinated movement of the two tRNA molecules, the mRNA and conformational changes in the ribosome. In Staphylothermus marinus (strain ATCC 43588 / DSM 3639 / JCM 9404 / F1), this protein is Elongation factor 2.